A 249-amino-acid polypeptide reads, in one-letter code: Transcription initiation factor TFIID subunit 9B (249 aa).

Met-1 carries the N-acetylmethionine modification. The residue at position 147 (Ser-147) is a Phosphoserine. The tract at residues 148 to 171 (AVSSRPTTPPVAPPQAVSGPNKAA) is disordered. The residue at position 172 (Thr-172) is a Phosphothreonine. The residue at position 175 (Ser-175) is a Phosphoserine. The span at 224-234 (VSSQNTATDSN) shows a compositional bias: polar residues. The disordered stretch occupies residues 224-249 (VSSQNTATDSNPLKRKHDDDDDNDTM).

It belongs to the TAF9 family. As to quaternary structure, binds TAF5 and TAF6. Component of TFIID and the TATA-binding protein-free TAF complex (TFTC). TFIID is composed of TATA binding protein (TBP) and a number of TBP-associated factors (TAFs). Binds N-terminal domain of p53/TP53 which is essential for transcription.

It localises to the nucleus. Essential for cell viability. TAF9 and TAF9B are involved in transcriptional activation as well as repression of distinct but overlapping sets of genes. May have a role in gene regulation associated with apoptosis. TAFs are components of the transcription factor IID (TFIID) complex, the TBP-free TAFII complex (TFTC), the PCAF histone acetylase complex and the STAGA transcription coactivator-HAT complex. TFIID or TFTC are essential for the regulation of RNA polymerase II-mediated transcription. The sequence is that of Transcription initiation factor TFIID subunit 9B (Taf9b) from Mus musculus (Mouse).